The following is a 152-amino-acid chain: MNIKLSFISIAFLSLSFNVAANEFEKSQEHYKSVTDLKNKIEILELEKKITELSGEIRNARMPKIDKSAPVLSPQPVVKSSEELQKSIEHIEEELKVELAYLVNNGQQKKYTFNLNGKLITLVNGDFVNGWKFIEDQNKIQFSKGNKVIDVN.

An N-terminal signal peptide occupies residues Met1–Ala20.

It localises to the periplasm. The protein resides in the secreted. In terms of biological role, the toxin coregulated pilus (TCP) is essential for successful colonization of the small intestine. This Vibrio cholerae serotype O1 (strain ATCC 39315 / El Tor Inaba N16961) protein is Toxin coregulated pilus biosynthesis protein S (tcpS).